The sequence spans 96 residues: Large ribosomal subunit protein bL28 (96 aa).

This sequence belongs to the bacterial ribosomal protein bL28 family.

This Methylobacterium nodulans (strain LMG 21967 / CNCM I-2342 / ORS 2060) protein is Large ribosomal subunit protein bL28.